We begin with the raw amino-acid sequence, 169 residues long: Crossover junction endodeoxyribonuclease RuvC (169 aa).

Active-site residues include Asp-7, Glu-67, and Asp-139. Mg(2+)-binding residues include Asp-7, Glu-67, and Asp-139.

It belongs to the RuvC family. Homodimer which binds Holliday junction (HJ) DNA. The HJ becomes 2-fold symmetrical on binding to RuvC with unstacked arms; it has a different conformation from HJ DNA in complex with RuvA. In the full resolvosome a probable DNA-RuvA(4)-RuvB(12)-RuvC(2) complex forms which resolves the HJ. The cofactor is Mg(2+).

It localises to the cytoplasm. The enzyme catalyses Endonucleolytic cleavage at a junction such as a reciprocal single-stranded crossover between two homologous DNA duplexes (Holliday junction).. Its function is as follows. The RuvA-RuvB-RuvC complex processes Holliday junction (HJ) DNA during genetic recombination and DNA repair. Endonuclease that resolves HJ intermediates. Cleaves cruciform DNA by making single-stranded nicks across the HJ at symmetrical positions within the homologous arms, yielding a 5'-phosphate and a 3'-hydroxyl group; requires a central core of homology in the junction. The consensus cleavage sequence is 5'-(A/T)TT(C/G)-3'. Cleavage occurs on the 3'-side of the TT dinucleotide at the point of strand exchange. HJ branch migration catalyzed by RuvA-RuvB allows RuvC to scan DNA until it finds its consensus sequence, where it cleaves and resolves the cruciform DNA. The chain is Crossover junction endodeoxyribonuclease RuvC from Rhodospirillum rubrum (strain ATCC 11170 / ATH 1.1.1 / DSM 467 / LMG 4362 / NCIMB 8255 / S1).